Consider the following 315-residue polypeptide: Secreted frizzled-related protein 3 (315 aa).

Positions M1–A21 are cleaved as a signal peptide. The FZ domain occupies G22–P142. Intrachain disulfides connect C27–C88, C35–C81, C72–C111, C100–C139, and C104–C128. Residue N41 is glycosylated (N-linked (GlcNAc...) asparagine). The region spanning C170–K290 is the NTR domain. A disordered region spans residues K284–S315.

It belongs to the secreted frizzled-related protein (sFRP) family.

It localises to the secreted. In terms of biological role, soluble frizzled-related proteins (sFRPS) function as modulators of Wnt signaling through direct interaction with Wnts. They have a role in regulating cell growth and differentiation in specific cell types. SFRP3/FRZB appears to be involved in limb skeletogenesis. Antagonist of Wnt8 signaling. Regulates chondrocyte maturation and long bone development. The polypeptide is Secreted frizzled-related protein 3 (FRZB) (Gallus gallus (Chicken)).